Consider the following 414-residue polypeptide: Gamma-glutamyl phosphate reductase (414 aa).

Belongs to the gamma-glutamyl phosphate reductase family.

The protein resides in the cytoplasm. The enzyme catalyses L-glutamate 5-semialdehyde + phosphate + NADP(+) = L-glutamyl 5-phosphate + NADPH + H(+). Its pathway is amino-acid biosynthesis; L-proline biosynthesis; L-glutamate 5-semialdehyde from L-glutamate: step 2/2. Its function is as follows. Catalyzes the NADPH-dependent reduction of L-glutamate 5-phosphate into L-glutamate 5-semialdehyde and phosphate. The product spontaneously undergoes cyclization to form 1-pyrroline-5-carboxylate. The chain is Gamma-glutamyl phosphate reductase from Caldanaerobacter subterraneus subsp. tengcongensis (strain DSM 15242 / JCM 11007 / NBRC 100824 / MB4) (Thermoanaerobacter tengcongensis).